The primary structure comprises 359 residues: 5-amino-6-(D-ribitylamino)uracil--L-tyrosine 4-hydroxyphenyl transferase 1 (359 aa).

A Radical SAM core domain is found at 45-282; sequence VTYVVNANIN…VYAISRIFFK (238 aa). [4Fe-4S] cluster-binding residues include cysteine 59, cysteine 63, and cysteine 66.

Belongs to the radical SAM superfamily. CofH family. In terms of assembly, consists of two subunits, CofG and CofH. [4Fe-4S] cluster serves as cofactor.

The enzyme catalyses 5-amino-6-(D-ribitylamino)uracil + L-tyrosine + S-adenosyl-L-methionine = 5-amino-5-(4-hydroxybenzyl)-6-(D-ribitylimino)-5,6-dihydrouracil + 2-iminoacetate + 5'-deoxyadenosine + L-methionine + H(+). It participates in cofactor biosynthesis; coenzyme F0 biosynthesis. Its function is as follows. Catalyzes the radical-mediated synthesis of 5-amino-5-(4-hydroxybenzyl)-6-(D-ribitylimino)-5,6-dihydrouracil from 5-amino-6-(D-ribitylamino)uracil and L-tyrosine. The polypeptide is 5-amino-6-(D-ribitylamino)uracil--L-tyrosine 4-hydroxyphenyl transferase 1 (Methanococcus maripaludis (strain DSM 14266 / JCM 13030 / NBRC 101832 / S2 / LL)).